A 449-amino-acid chain; its full sequence is MFS acetylaranotin efflux transporter ataA (449 aa).

A run of 7 helical transmembrane segments spans residues serine 6–proline 26, tyrosine 45–isoleucine 65, tryptophan 67–proline 87, phenylalanine 115–valine 135, leucine 155–glycine 175, asparagine 182–isoleucine 202, and leucine 227–phenylalanine 247. The N-linked (GlcNAc...) asparagine glycan is linked to asparagine 252. 5 consecutive transmembrane segments (helical) span residues isoleucine 260–valine 280, valine 287–phenylalanine 307, valine 321–valine 341, valine 349–alanine 369, and alanine 420–valine 440.

It belongs to the major facilitator superfamily.

It is found in the cell membrane. Functionally, efflux pump that may provide the dual role of acetylaranotin export and self-protection by allowing the fungus to evade the harmful effect of its own acetylaranotin production. The sequence is that of MFS acetylaranotin efflux transporter ataA from Aspergillus terreus (strain NIH 2624 / FGSC A1156).